The following is a 140-amino-acid chain: Actin-depolymerizing factor 8 (140 aa).

Serine 6 carries the post-translational modification Phosphoserine. In terms of domain architecture, ADF-H spans glycine 7–asparagine 139.

Belongs to the actin-binding proteins ADF family. In terms of tissue distribution, expressed in the root trichoblast cells and developed root hairs.

The protein localises to the cytoplasm. The protein resides in the cytoskeleton. Actin-depolymerizing protein. Severs actin filaments (F-actin) and binds to actin monomers. This is Actin-depolymerizing factor 8 (ADF8) from Arabidopsis thaliana (Mouse-ear cress).